The following is a 382-amino-acid chain: MSTYTRPVMLLLCGLLLLTLAIAVLNTLVPLWLAQANLPTWQVGMVSSSYFTGNLVGTLFTGYLIKRIGFNRSYYLASLIFAAGCVGLGVMVGFWSWMSWRFIAGIGCAMIWVVVESALMCSGTSHNRGRLLAAYMMVYYMGTFLGQLLVSKVSGELLHVLPWVTGMILAGILPLLFTRIVNQQTQARHSSSISAMLKLRQARLGVNGCIISGIVLGSLYGLMPLYLKHQGMANASIGFWMAVLVSAGILGQWPMGRLADKFGRLLVLRVQVFVVILGSIAMLTQAAMAPALFILGAAGFTLYPVAMAWACEKVEHHQLVAMNQALLLSYTVGSLLGPSFAAMLMQNYSDNLLFIMIASVSFIYLLMLLRNAGQTPNPVAHI.

12 helical membrane passes run 8 to 28 (VMLL…LNTL), 45 to 65 (MVSS…GYLI), 75 to 95 (YLAS…VGFW), 102 to 122 (FIAG…LMCS), 131 to 151 (LLAA…LLVS), 157 to 177 (LLHV…PLLF), 204 to 224 (LGVN…GLMP), 231 to 251 (GMAN…GILG), 270 to 290 (VQVF…AMAP), 291 to 311 (ALFI…AWAC), 325 to 345 (ALLL…AMLM), and 349 to 369 (SDNL…LMLL).

Belongs to the major facilitator superfamily. YcaD (TC 2.A.1.26) family.

It localises to the cell inner membrane. This is an uncharacterized protein from Salmonella newport (strain SL254).